The following is a 129-amino-acid chain: uncharacterized protein (129 aa).

This is an uncharacterized protein from Methanocaldococcus jannaschii (strain ATCC 43067 / DSM 2661 / JAL-1 / JCM 10045 / NBRC 100440) (Methanococcus jannaschii).